A 500-amino-acid polypeptide reads, in one-letter code: AAA-ATPase At3g28580 (500 aa).

A helical transmembrane segment spans residues 7–29 (LWTNTGSALATLMFVYTIFKQFF). The segment at 174-193 (NRERKLYSNTPGQSHGNNSK) is disordered. Over residues 180–193 (YSNTPGQSHGNNSK) the composition is skewed to polar residues. Position 247–254 (247–254 (GPPGTGKS)) interacts with ATP. The interval 462-500 (KEEAKKKVEEEEEEKQRKKEKVKEIEAEKEKKKKIEEEN) is disordered.

The protein belongs to the AAA ATPase family. BCS1 subfamily. The cofactor is Mg(2+).

The protein resides in the membrane. The enzyme catalyses ATP + H2O = ADP + phosphate + H(+). This is AAA-ATPase At3g28580 from Arabidopsis thaliana (Mouse-ear cress).